The chain runs to 72 residues: SRY-related protein AES1 (72 aa).

Positions 1–69 form a DNA-binding region, HMG box; it reads VKRPMNAFMV…KHMADYPDYK (69 aa).

The protein localises to the nucleus. This Alligator mississippiensis (American alligator) protein is SRY-related protein AES1.